A 222-amino-acid polypeptide reads, in one-letter code: 26S proteasome non-ATPase regulatory subunit 9 (222 aa).

A PDZ domain is found at 108–194 (QARDMAEARE…KPLNVMVIRR (87 aa)). Residue Ser128 is modified to Phosphoserine.

The protein belongs to the proteasome subunit p27 family. Interacts with PSMC3. Part of a transient complex (modulator) containing PSMD9, PSMC6 and PSMC3 formed during the assembly of the 26S proteasome.

Functionally, acts as a chaperone during the assembly of the 26S proteasome, specifically of the base subcomplex of the PA700/19S regulatory complex (RC). During the base subcomplex assembly is part of an intermediate PSMD9:PSMC6:PSMC3 module, also known as modulator trimer complex; PSMD9 is released during the further base assembly process. The polypeptide is 26S proteasome non-ATPase regulatory subunit 9 (Psmd9) (Rattus norvegicus (Rat)).